We begin with the raw amino-acid sequence, 115 residues long: Large ribosomal subunit protein bL20 (115 aa).

The protein belongs to the bacterial ribosomal protein bL20 family.

Its function is as follows. Binds directly to 23S ribosomal RNA and is necessary for the in vitro assembly process of the 50S ribosomal subunit. It is not involved in the protein synthesizing functions of that subunit. In Borrelia duttonii (strain Ly), this protein is Large ribosomal subunit protein bL20.